The chain runs to 511 residues: Maturase K (511 aa).

Belongs to the intron maturase 2 family. MatK subfamily.

The protein resides in the plastid. It is found in the chloroplast. In terms of biological role, usually encoded in the trnK tRNA gene intron. Probably assists in splicing its own and other chloroplast group II introns. This is Maturase K from Melica altissima (Siberian melic grass).